The sequence spans 483 residues: UDP-N-acetylmuramate--L-alanine ligase (483 aa).

G128–T134 serves as a coordination point for ATP.

Belongs to the MurCDEF family.

It localises to the cytoplasm. It carries out the reaction UDP-N-acetyl-alpha-D-muramate + L-alanine + ATP = UDP-N-acetyl-alpha-D-muramoyl-L-alanine + ADP + phosphate + H(+). It functions in the pathway cell wall biogenesis; peptidoglycan biosynthesis. In terms of biological role, cell wall formation. This is UDP-N-acetylmuramate--L-alanine ligase from Shewanella violacea (strain JCM 10179 / CIP 106290 / LMG 19151 / DSS12).